The sequence spans 183 residues: Ribosome maturation factor RimM (183 aa).

The 77-residue stretch at 95 to 171 folds into the PRC barrel domain; the sequence is DPDEFYDHEL…VVVIDPPEGL (77 aa).

It belongs to the RimM family. In terms of assembly, binds ribosomal protein uS19.

The protein localises to the cytoplasm. Functionally, an accessory protein needed during the final step in the assembly of 30S ribosomal subunit, possibly for assembly of the head region. Essential for efficient processing of 16S rRNA. May be needed both before and after RbfA during the maturation of 16S rRNA. It has affinity for free ribosomal 30S subunits but not for 70S ribosomes. This is Ribosome maturation factor RimM from Rhodococcus opacus (strain B4).